The chain runs to 398 residues: Succinate--CoA ligase [ADP-forming] subunit beta (398 aa).

Positions 9–253 (MALLNERGVS…AGASDPLEQE (245 aa)) constitute an ATP-grasp domain. ATP contacts are provided by residues Lys-46, 53–55 (GRG), Val-111, and Glu-116. 2 residues coordinate Mg(2+): Asn-208 and Asp-222. Residues Asn-273 and 330 to 332 (GIM) contribute to the substrate site.

Belongs to the succinate/malate CoA ligase beta subunit family. As to quaternary structure, heterotetramer of two alpha and two beta subunits. Mg(2+) is required as a cofactor.

It catalyses the reaction succinate + ATP + CoA = succinyl-CoA + ADP + phosphate. The enzyme catalyses GTP + succinate + CoA = succinyl-CoA + GDP + phosphate. Its pathway is carbohydrate metabolism; tricarboxylic acid cycle; succinate from succinyl-CoA (ligase route): step 1/1. Succinyl-CoA synthetase functions in the citric acid cycle (TCA), coupling the hydrolysis of succinyl-CoA to the synthesis of either ATP or GTP and thus represents the only step of substrate-level phosphorylation in the TCA. The beta subunit provides nucleotide specificity of the enzyme and binds the substrate succinate, while the binding sites for coenzyme A and phosphate are found in the alpha subunit. In Zymomonas mobilis subsp. mobilis (strain ATCC 31821 / ZM4 / CP4), this protein is Succinate--CoA ligase [ADP-forming] subunit beta.